We begin with the raw amino-acid sequence, 224 residues long: MATSMIQRLFKQGTKIVGVGLNYASHAKELGNALPKDPIVFLKPTSSYLENGGTIEIPHPLDSLHHEVELAVVIGQKARDVPERLAMNYIGGYALALDMTARELQVSAMASGLPCTLAKGQDTFTPISSVLPKAMVLDPNNLELWLKVDDETRQKGWTKDMIFKVPYLISYISSVMTLFKGDVILTGTPEGIGPVKIGQKITAGITGLSEVQFDVGRRLKPLLR.

The N-terminal 30 residues, 1–30, are a transit peptide targeting the mitochondrion; the sequence is MATSMIQRLFKQGTKIVGVGLNYASHAKEL. Residues glutamate 67, glutamate 69, and aspartate 98 each contribute to the Mg(2+) site.

The protein belongs to the FAH family. Requires Mg(2+) as cofactor. Mn(2+) serves as cofactor.

Its subcellular location is the mitochondrion. The catalysed reaction is oxaloacetate = enol-oxaloacetate. Functionally, tautomerase that converts enol-oxaloacetate, a strong inhibitor of succinate dehydrogenase, to the physiological keto form of oxaloacetate. This is Oxaloacetate tautomerase FAHD2, mitochondrial from Arabidopsis thaliana (Mouse-ear cress).